Consider the following 77-residue polypeptide: UPF0248 protein Pcal_0252 (77 aa).

This sequence belongs to the UPF0248 family.

The polypeptide is UPF0248 protein Pcal_0252 (Pyrobaculum calidifontis (strain DSM 21063 / JCM 11548 / VA1)).